The primary structure comprises 206 residues: Macrophage immunometabolism regulator (206 aa).

It belongs to the UNC119-binding protein family. As to quaternary structure, interacts with unc119 family proteins; interaction preferentially takes place when unc119 proteins are unliganded with myristoylated proteins.

The protein resides in the cytoplasm. It is found in the cell projection. Its subcellular location is the cilium. Its function is as follows. May play a role in immune regulation through regulation of the macrophage function. Involved in the recruitment of macrophages in response to injury. May also play a role in trafficking of proteins via its interaction with unc119 family cargo adapters. May play a role in ciliary membrane localization. In terms of biological role, regulates the macrophage function, by enhancing the resolution of inflammation and wound repair functions mediated by M2 macrophages. The regulation of macrophage function is, due at least in part, to the role of C5orf30 in regulating ability to inhibit glycolysis. Probably plays alaso a role in trafficking of proteins via its interaction with UNC119 and UNC119B cargo adapters: may help the release of UNC119 and UNC119B cargo or the recycling of UNC119 and UNC119B. May play a role in ciliary membrane localization via its interaction with UNC119B and protein transport into photoreceptor cells. This Danio rerio (Zebrafish) protein is Macrophage immunometabolism regulator (macir).